The chain runs to 247 residues: NAD-dependent protein deacetylase 2 (247 aa).

One can recognise a Deacetylase sirtuin-type domain in the interval 1–247 (MDQIRQLAQW…ASVRKQIQAE (247 aa)). NAD(+) contacts are provided by alanine 23, threonine 27, phenylalanine 34, arginine 35, glutamine 103, isoleucine 105, aspartate 106, and histidine 121. Phenylalanine 34 is a binding site for nicotinamide. Positions 105 and 106 each coordinate nicotinamide. Histidine 121 (proton acceptor) is an active-site residue. Residues cysteine 129, cysteine 132, cysteine 149, and cysteine 152 each coordinate Zn(2+). NAD(+) contacts are provided by threonine 188, serine 189, asparagine 215, and isoleucine 233.

It belongs to the sirtuin family. Class U subfamily. Requires Zn(2+) as cofactor.

The protein resides in the cytoplasm. It carries out the reaction N(6)-acetyl-L-lysyl-[protein] + NAD(+) + H2O = 2''-O-acetyl-ADP-D-ribose + nicotinamide + L-lysyl-[protein]. NAD-dependent protein deacetylase which modulates the activities of several enzymes which are inactive in their acetylated form. The protein is NAD-dependent protein deacetylase 2 of Geobacillus kaustophilus (strain HTA426).